The chain runs to 369 residues: uncharacterized protein (369 aa).

It to A.pernix APE1276 and APE1804.

This is an uncharacterized protein from Saccharolobus solfataricus (strain ATCC 35092 / DSM 1617 / JCM 11322 / P2) (Sulfolobus solfataricus).